Consider the following 776-residue polypeptide: Lon protease (776 aa).

A Lon N-terminal domain is found at 12 to 209 (LPIIALRGLW…LVYKFVIKEI (198 aa)). ATP is bound at residue 360 to 367 (GPPGVGKT). Residues 596–776 (EDTVGVVNGL…VKEILDEVLI (181 aa)) enclose the Lon proteolytic domain. Catalysis depends on residues Ser-683 and Lys-726.

Belongs to the peptidase S16 family. As to quaternary structure, homohexamer. Organized in a ring with a central cavity.

It localises to the cytoplasm. It carries out the reaction Hydrolysis of proteins in presence of ATP.. Functionally, ATP-dependent serine protease that mediates the selective degradation of mutant and abnormal proteins as well as certain short-lived regulatory proteins. Required for cellular homeostasis and for survival from DNA damage and developmental changes induced by stress. Degrades polypeptides processively to yield small peptide fragments that are 5 to 10 amino acids long. Binds to DNA in a double-stranded, site-specific manner. This Finegoldia magna (strain ATCC 29328 / DSM 20472 / WAL 2508) (Peptostreptococcus magnus) protein is Lon protease.